Here is a 140-residue protein sequence, read N- to C-terminus: Probable transport accessory protein MmpS4 (140 aa).

The helical transmembrane segment at 2 to 22 (LMRTWIPLVILVVVIVGGFTV) threads the bilayer.

This sequence belongs to the MmpS family.

It localises to the cell membrane. The sequence is that of Probable transport accessory protein MmpS4 (mmpS4) from Mycobacterium bovis (strain ATCC BAA-935 / AF2122/97).